Consider the following 145-residue polypeptide: Phospholipase A2, membrane associated (145 aa).

The N-terminal stretch at 1 to 20 (MKLLLLLLVVMASDLPQAHG) is a signal peptide. Cystine bridges form between Cys-46/Cys-138, Cys-48/Cys-64, Cys-63/Cys-118, Cys-69/Cys-145, Cys-70/Cys-111, Cys-79/Cys-104, and Cys-97/Cys-109. The Ca(2+) site is built by His-47, Gly-49, and Gly-51. The active site involves His-67. Asp-68 contributes to the Ca(2+) binding site. Residue Asp-112 is part of the active site.

The protein belongs to the phospholipase A2 family. It depends on Ca(2+) as a cofactor. In terms of tissue distribution, alveolar macrophages, and at much lower levels in peripheral blood monocytes and peritoneal macrophages.

The protein localises to the secreted. It is found in the cell membrane. The protein resides in the mitochondrion outer membrane. It carries out the reaction a 1,2-diacyl-sn-glycero-3-phosphoethanolamine + H2O = a 1-acyl-sn-glycero-3-phosphoethanolamine + a fatty acid + H(+). The catalysed reaction is 1-hexadecanoyl-2-(9Z-octadecenoyl)-sn-glycero-3-phosphoethanolamine + H2O = 1-hexadecanoyl-sn-glycero-3-phosphoethanolamine + (9Z)-octadecenoate + H(+). The enzyme catalyses 1-hexadecanoyl-2-(9Z,12Z-octadecadienoyl)-sn-glycero-3-phosphoethanolamine + H2O = 1-hexadecanoyl-sn-glycero-3-phosphoethanolamine + (9Z,12Z)-octadecadienoate + H(+). It catalyses the reaction 1-hexadecanoyl-2-(5Z,8Z,11Z,14Z-eicosatetraenoyl)-sn-glycero-3-phosphoethanolamine + H2O = 1-hexadecanoyl-sn-glycero-3-phosphoethanolamine + (5Z,8Z,11Z,14Z)-eicosatetraenoate + H(+). It carries out the reaction N-hexadecanoyl-1,2-di-(9Z-octadecenoyl)-sn-glycero-3-phosphoethanolamine + H2O = N-hexadecanoyl-1-(9Z-octadecenoyl)-sn-glycero-3-phosphoethanolamine + (9Z)-octadecenoate + H(+). The catalysed reaction is 1,2-dihexadecanoyl-sn-glycero-3-phospho-(1'-sn-glycerol) + H2O = 1-hexadecanoyl-sn-glycero-3-phospho-(1'-sn-glycerol) + hexadecanoate + H(+). The enzyme catalyses 1-hexadecanoyl-2-(9Z-octadecenoyl)-sn-glycero-3-phosphoglycerol + H2O = 1-hexadecanoyl-sn-glycero-3-phosphoglycerol + (9Z)-octadecenoate + H(+). It catalyses the reaction 1-hexadecanoyl-2-(9Z-octadecenoyl)-sn-glycero-3-phospho-(1'-sn-glycerol) + H2O = 1-hexadecanoyl-sn-glycero-3-phospho-(1'-sn-glycerol) + (9Z)-octadecenoate + H(+). It carries out the reaction a 1,2-diacyl-sn-glycero-3-phosphocholine + H2O = a 1-acyl-sn-glycero-3-phosphocholine + a fatty acid + H(+). The catalysed reaction is 1,2-dihexadecanoyl-sn-glycero-3-phosphocholine + H2O = 1-hexadecanoyl-sn-glycero-3-phosphocholine + hexadecanoate + H(+). The enzyme catalyses 1-hexadecanoyl-2-(9Z-octadecenoyl)-sn-glycero-3-phosphocholine + H2O = 1-hexadecanoyl-sn-glycero-3-phosphocholine + (9Z)-octadecenoate + H(+). It catalyses the reaction 1-hexadecanoyl-2-(9Z,12Z-octadecadienoyl)-sn-glycero-3-phosphocholine + H2O = (9Z,12Z)-octadecadienoate + 1-hexadecanoyl-sn-glycero-3-phosphocholine + H(+). It carries out the reaction 1-hexadecanoyl-2-(4Z,7Z,10Z,13Z,16Z,19Z-docosahexaenoyl)-sn-glycero-3-phosphocholine + H2O = (4Z,7Z,10Z,13Z,16Z,19Z)-docosahexaenoate + 1-hexadecanoyl-sn-glycero-3-phosphocholine + H(+). In terms of biological role, secretory calcium-dependent phospholipase A2 that primarily targets extracellular phospholipids with implications in host antimicrobial defense, inflammatory response and tissue regeneration. Hydrolyzes the ester bond of the fatty acyl group attached at sn-2 position of phospholipids (phospholipase A2 activity) with preference for phosphatidylethanolamines and phosphatidylglycerols over phosphatidylcholines. Contributes to lipid remodeling of cellular membranes and generation of lipid mediators involved in pathogen clearance. Displays bactericidal activity against Gram-positive bacteria by directly hydrolyzing phospholipids of the bacterial membrane. Upon sterile inflammation, targets membrane phospholipids of extracellular mitochondria released from activated platelets, generating free unsaturated fatty acids such as arachidonate that is used by neighboring leukocytes to synthesize inflammatory eicosanoids such as leukotrienes. Simultaneously, by compromising mitochondrial membrane integrity, promotes the release in circulation of potent damage-associated molecular pattern molecules that activate the innate immune response. Plays a stem cell regulator role in the intestinal crypt. Within intracellular compartment mediates Paneth cell differentiation and its stem cell supporting functions by inhibiting Wnt signaling pathway in intestinal stem cell (ICS). Secreted in the intestinal lumen upon inflammation, acts in an autocrine way and promotes prostaglandin E2 synthesis that stimulates Wnt signaling pathway in ICS cells and tissue regeneration. May play a role in the biosynthesis of N-acyl ethanolamines that regulate energy metabolism and inflammation. Hydrolyzes N-acyl phosphatidylethanolamines to N-acyl lysophosphatidylethanolamines, which are further cleaved by a lysophospholipase D to release N-acyl ethanolamines. Independent of its catalytic activity, acts as a ligand for integrins. Binds to and activates integrins ITGAV:ITGB3, ITGA4:ITGB1 and ITGA5:ITGB1. Binds to a site (site 2) which is distinct from the classical ligand-binding site (site 1) and induces integrin conformational changes and enhanced ligand binding to site 1. Induces cell proliferation in an integrin-dependent manner. The sequence is that of Phospholipase A2, membrane associated (PLA2G2A) from Cavia porcellus (Guinea pig).